Reading from the N-terminus, the 993-residue chain is Type II inositol 1,4,5-trisphosphate 5-phosphatase (993 aa).

Residues 22-148 (QGVLCKGDSR…PEFEWLSRHT (127 aa)) enclose the PH domain. Basic and acidic residues-rich tracts occupy residues 149–163 (CAEP…REWN) and 294–303 (SKSDMSEKVR). Disordered regions lie at residues 149–191 (CAEP…GLED) and 236–304 (EALE…KVRS). The tract at residues 342–668 (IQNFRFFVGT…LDKMENANIP (327 aa)) is 5-phosphatase. Asparagine 355 and glutamate 383 together coordinate Mg(2+). Residues glutamate 383, 459–460 (NK), 582–583 (YK), and 596–598 (KCR) contribute to the substrate site. The tract at residues 669–782 (SVTLSKREFC…LSVSGNYLPS (114 aa)) is ASH. A Rho-GAP domain is found at 821-993 (SQLENPMEIP…FIHQFLCGPL (173 aa)). Residue cysteine 990 is modified to Cysteine methyl ester. The S-farnesyl cysteine moiety is linked to residue cysteine 990. A propeptide spans 991 to 993 (GPL) (removed in mature form).

It belongs to the inositol 1,4,5-trisphosphate 5-phosphatase type II family. As to quaternary structure, interacts with APPL1, PHETA1 and PHETA2. Interacts with several Rab GTPases, at least RAB1A, RAB2A, RAB5A, RAB6A, RAB8A, RAB9A and RAB33B; these interactions may play a dual role in targeting INPP5B to the specific membranes and stimulating its phosphatase activity. Interacts preferentially with non-phosphorylated RAB8A; phosphorylation of RAB8A on 'Thr-72' disrupts this interaction. Interacts with INPP5F. Isoprenylation at Cys-990 may be required for localization at the membrane. Post-translationally, may be proteolytically cleaved after Lys-320 as inferred from N-terminal protein sequence of the 75 kda form. In terms of tissue distribution, detected in kidney, liver, brain, lung and testis (at protein level). Detected in kidney and liver, and at lower levels in brain, lung and testis.

The protein localises to the cytoplasm. It is found in the cytosol. Its subcellular location is the endoplasmic reticulum-Golgi intermediate compartment. The protein resides in the early endosome membrane. It localises to the membrane. The protein localises to the cytoplasmic vesicle. It is found in the phagosome membrane. The enzyme catalyses a 1,2-diacyl-sn-glycero-3-phospho-(1D-myo-inositol-4,5-bisphosphate) + H2O = a 1,2-diacyl-sn-glycero-3-phospho-(1D-myo-inositol 4-phosphate) + phosphate. In terms of biological role, hydrolyzes phosphatidylinositol 4,5-bisphosphate (PtIns(4,5)P2) and the signaling molecule phosphatidylinositol 1,4,5-trisphosphate (PtIns(1,4,5)P3), and thereby modulates cellular signaling events. The chain is Type II inositol 1,4,5-trisphosphate 5-phosphatase (Inpp5b) from Mus musculus (Mouse).